The following is a 197-amino-acid chain: MIALLRGLVVEKHPNQVLVETGGVGYDVTIPVSTFTKLPDLGGEVRLRIYTHVREDVLALYGFLTQDEKALFEKLISVSGIGPTLAVKILSGLAAADLILSIRRGEVEKLVKVPGVGKKTAERMVLELRDKLPAATGEEPGAPAAEALSPIDQDVLSALLNLGCARPQAEAAVRKAKAAGASLDFEPLFRRALELVR.

Residues 1-64 form a domain I region; sequence MIALLRGLVV…EDVLALYGFL (64 aa). Residues 65–143 form a domain II region; that stretch reads TQDEKALFEK…AATGEEPGAP (79 aa). Positions 144 to 153 are flexible linker; sequence AAEALSPIDQ. Residues 153 to 197 are domain III; that stretch reads QDVLSALLNLGCARPQAEAAVRKAKAAGASLDFEPLFRRALELVR.

This sequence belongs to the RuvA family. As to quaternary structure, homotetramer. Forms an RuvA(8)-RuvB(12)-Holliday junction (HJ) complex. HJ DNA is sandwiched between 2 RuvA tetramers; dsDNA enters through RuvA and exits via RuvB. An RuvB hexamer assembles on each DNA strand where it exits the tetramer. Each RuvB hexamer is contacted by two RuvA subunits (via domain III) on 2 adjacent RuvB subunits; this complex drives branch migration. In the full resolvosome a probable DNA-RuvA(4)-RuvB(12)-RuvC(2) complex forms which resolves the HJ.

The protein resides in the cytoplasm. In terms of biological role, the RuvA-RuvB-RuvC complex processes Holliday junction (HJ) DNA during genetic recombination and DNA repair, while the RuvA-RuvB complex plays an important role in the rescue of blocked DNA replication forks via replication fork reversal (RFR). RuvA specifically binds to HJ cruciform DNA, conferring on it an open structure. The RuvB hexamer acts as an ATP-dependent pump, pulling dsDNA into and through the RuvAB complex. HJ branch migration allows RuvC to scan DNA until it finds its consensus sequence, where it cleaves and resolves the cruciform DNA. The sequence is that of Holliday junction branch migration complex subunit RuvA from Solibacter usitatus (strain Ellin6076).